The following is a 587-amino-acid chain: Phosphomethylpyrimidine synthase (587 aa).

Residues 1-58 (MTPTQNEIHPKHSYSPIRKDGLEVPETEIRLDDSPSGPNEPFRIYRTRGPETNPKQGL) form a disordered region. Over residues 17–33 (IRKDGLEVPETEIRLDD) the composition is skewed to basic and acidic residues. Substrate is bound by residues Asn180, Met209, Tyr238, His274, 294 to 296 (SRG), 335 to 338 (DGLR), and Glu374. His378 serves as a coordination point for Zn(2+). Residue Tyr401 participates in substrate binding. His442 provides a ligand contact to Zn(2+). [4Fe-4S] cluster is bound by residues Cys522, Cys525, and Cys530.

Belongs to the ThiC family. It depends on [4Fe-4S] cluster as a cofactor.

The enzyme catalyses 5-amino-1-(5-phospho-beta-D-ribosyl)imidazole + S-adenosyl-L-methionine = 4-amino-2-methyl-5-(phosphooxymethyl)pyrimidine + CO + 5'-deoxyadenosine + formate + L-methionine + 3 H(+). Its pathway is cofactor biosynthesis; thiamine diphosphate biosynthesis. Functionally, catalyzes the synthesis of the hydroxymethylpyrimidine phosphate (HMP-P) moiety of thiamine from aminoimidazole ribotide (AIR) in a radical S-adenosyl-L-methionine (SAM)-dependent reaction. This Corynebacterium glutamicum (strain ATCC 13032 / DSM 20300 / JCM 1318 / BCRC 11384 / CCUG 27702 / LMG 3730 / NBRC 12168 / NCIMB 10025 / NRRL B-2784 / 534) protein is Phosphomethylpyrimidine synthase.